Consider the following 196-residue polypeptide: Fucoxanthin-chlorophyll a-c binding protein A, chloroplastic (196 aa).

The N-terminal 31 residues, 1–31, are a transit peptide targeting the chloroplast; sequence MKFAVFASLLASRAAFAPAQQSARTSVATNM. The next 3 membrane-spanning stretches (helical) occupy residues 73 to 94, 114 to 134, and 174 to 196; these read ICML…PGDI, VPGA…IAVM, and GRAA…SILP.

Belongs to the fucoxanthin chlorophyll protein family. As to quaternary structure, the LHC complex of chromophytic algae is composed of fucoxanthin, chlorophyll A and C bound non-covalently by fucoxanthin chlorophyll proteins (FCPs). The ratio of the pigments in LHC; fucoxanthin: chlorophyll C: chlorophyll A; (0.6-1): (0.1-0.3): (1).

Its subcellular location is the plastid. It is found in the chloroplast thylakoid membrane. The light-harvesting complex (LHC) functions as a light receptor, it captures and delivers excitation energy to photosystems with which it is closely associated. Energy is transferred from the carotenoid and chlorophyll C (or B) to chlorophyll A and the photosynthetic reaction centers where it is used to synthesize ATP and reducing power. This chain is Fucoxanthin-chlorophyll a-c binding protein A, chloroplastic (FCPA), found in Phaeodactylum tricornutum (Diatom).